The primary structure comprises 183 residues: Photosystem I assembly protein Ycf3 (183 aa).

TPR repeat units follow at residues A35–S68, S72–L105, and G120–N153.

The protein belongs to the Ycf3 family.

Its subcellular location is the plastid. It localises to the chloroplast thylakoid membrane. Its function is as follows. Essential for the assembly of the photosystem I (PSI) complex. May act as a chaperone-like factor to guide the assembly of the PSI subunits. This chain is Photosystem I assembly protein Ycf3, found in Adiantum capillus-veneris (Maidenhair fern).